Consider the following 684-residue polypeptide: Protein ecdysoneless (684 aa).

The span at 491–501 shows a compositional bias: acidic residues; sequence EPELDSDDDEP. Disordered regions lie at residues 491 to 528 and 603 to 624; these read EPEL…CQRN and TSVG…EDDF.

The protein belongs to the ECD family. Expressed in the ecdysone-producing larval ring gland, nervous system, imaginal disks and gonads.

It localises to the cytoplasm. Its function is as follows. Required in both the follicle cells and the germline for oocyte development. This chain is Protein ecdysoneless, found in Drosophila melanogaster (Fruit fly).